Consider the following 201-residue polypeptide: Small ribosomal subunit protein uS4c (201 aa).

Residues 89-152 enclose the S4 RNA-binding domain; the sequence is MRLDNILFRL…NSRTLVQNLL (64 aa).

The protein belongs to the universal ribosomal protein uS4 family. Part of the 30S ribosomal subunit. Contacts protein S5. The interaction surface between S4 and S5 is involved in control of translational fidelity.

It is found in the plastid. The protein localises to the chloroplast. Its function is as follows. One of the primary rRNA binding proteins, it binds directly to 16S rRNA where it nucleates assembly of the body of the 30S subunit. In terms of biological role, with S5 and S12 plays an important role in translational accuracy. The polypeptide is Small ribosomal subunit protein uS4c (rps4) (Capsella bursa-pastoris (Shepherd's purse)).